We begin with the raw amino-acid sequence, 135 residues long: Envelope glycoprotein N (135 aa).

The signal sequence occupies residues 1–19 (MEWNTLVLGLLVLSVVASS). At 20–98 (NNTSTASTPR…SHMYELSLSS (79 aa)) the chain is on the virion surface side. Over residues 21 to 68 (NTSTASTPRPSSSTHASTTVKATTVATTSTTTATSTSSTTSAKPGSTT) the composition is skewed to low complexity. The disordered stretch occupies residues 21-73 (NTSTASTPRPSSSTHASTTVKATTVATTSTTTATSTSSTTSAKPGSTTHDPNV). A helical transmembrane segment spans residues 99–119 (FAAWWTMLNALILMGAFCIVL). The Intravirion portion of the chain corresponds to 120–135 (RHCCFQNFTATTTKGY).

This sequence belongs to the herpesviridae glycoprotein N family. As to quaternary structure, interacts (via N-terminus) with gM (via N-terminus). The gM-gN heterodimer forms the gCII complex. Post-translationally, O-glycosylated.

It is found in the virion membrane. Its subcellular location is the host membrane. The protein resides in the host Golgi apparatus. It localises to the host trans-Golgi network. Envelope glycoprotein necessary for proper maturation of gM and modulation of its membrane fusion activity. Also plays a critical role in virion morphogenesis. This is Envelope glycoprotein N from Homo sapiens (Human).